We begin with the raw amino-acid sequence, 537 residues long: Probable sterol O-acyltransferase 1 (537 aa).

The next 4 helical transmembrane spans lie at 98–118 (FRGF…QLYA), 140–160 (FFVL…SYGL), 174–194 (LGYT…VYWV), and 199–219 (FPIV…MKQF). Asparagine 250 carries an N-linked (GlcNAc...) asparagine glycan. The next 2 membrane-spanning stretches (helical) occupy residues 344–364 (FGLL…SAVA) and 384–404 (IMFP…DCIL). The short motif at 418 to 424 (FYGAWWN) is the FYXDWWN motif element. A run of 2 helical transmembrane segments spans residues 462-482 (AVLL…LLAT) and 517-537 (VFFW…YIVF). Histidine 474 is a catalytic residue.

The protein belongs to the membrane-bound acyltransferase family. Sterol o-acyltransferase subfamily.

It localises to the endoplasmic reticulum membrane. Functionally, sterol O-acyltransferase that catalyzes the formation of stery esters. This chain is Probable sterol O-acyltransferase 1 (are1), found in Schizosaccharomyces pombe (strain 972 / ATCC 24843) (Fission yeast).